Here is a 257-residue protein sequence, read N- to C-terminus: Small ribosomal subunit protein uS4c (257 aa).

S4 RNA-binding domains lie at 110–170 (MRLD…QLVN) and 189–255 (KTLP…KNYL).

The protein belongs to the universal ribosomal protein uS4 family. Part of the 30S ribosomal subunit. Contacts protein S5. The interaction surface between S4 and S5 is involved in control of translational fidelity.

Its subcellular location is the plastid. The protein resides in the chloroplast. One of the primary rRNA binding proteins, it binds directly to 16S rRNA where it nucleates assembly of the body of the 30S subunit. Functionally, with S5 and S12 plays an important role in translational accuracy. This Chlamydomonas reinhardtii (Chlamydomonas smithii) protein is Small ribosomal subunit protein uS4c (rps4).